Here is a 227-residue protein sequence, read N- to C-terminus: Cytidylate kinase (227 aa).

12-20 (GPSGSGKGT) serves as a coordination point for ATP.

It belongs to the cytidylate kinase family. Type 1 subfamily.

The protein localises to the cytoplasm. It catalyses the reaction CMP + ATP = CDP + ADP. The enzyme catalyses dCMP + ATP = dCDP + ADP. The protein is Cytidylate kinase of Nitrosococcus oceani (strain ATCC 19707 / BCRC 17464 / JCM 30415 / NCIMB 11848 / C-107).